The primary structure comprises 25 residues: Bifunctional chitinase/lysozyme (25 aa).

It belongs to the glycosyl hydrolase 19 family. Chitinase class I subfamily. As to quaternary structure, monomer.

It localises to the secreted. Its subcellular location is the extracellular space. It carries out the reaction Random endo-hydrolysis of N-acetyl-beta-D-glucosaminide (1-&gt;4)-beta-linkages in chitin and chitodextrins.. The catalysed reaction is Hydrolysis of (1-&gt;4)-beta-linkages between N-acetylmuramic acid and N-acetyl-D-glucosamine residues in a peptidoglycan and between N-acetyl-D-glucosamine residues in chitodextrins.. Bifunctional enzyme with lysozyme/chitinase activity. The chain is Bifunctional chitinase/lysozyme from Carica papaya (Papaya).